The primary structure comprises 173 residues: CDP-archaeol synthase (173 aa).

5 consecutive transmembrane segments (helical) span residues 15–35, 59–79, 84–104, 118–138, and 142–162; these read GLWF…FGGG, GFIV…LVVG, AGDG…GSFV, VLDQ…VYGW, and GWVL…TNVI.

It belongs to the CDP-archaeol synthase family. The cofactor is Mg(2+).

The protein localises to the cell membrane. It carries out the reaction 2,3-bis-O-(geranylgeranyl)-sn-glycerol 1-phosphate + CTP + H(+) = CDP-2,3-bis-O-(geranylgeranyl)-sn-glycerol + diphosphate. Its pathway is membrane lipid metabolism; glycerophospholipid metabolism. Its function is as follows. Catalyzes the formation of CDP-2,3-bis-(O-geranylgeranyl)-sn-glycerol (CDP-archaeol) from 2,3-bis-(O-geranylgeranyl)-sn-glycerol 1-phosphate (DGGGP) and CTP. This reaction is the third ether-bond-formation step in the biosynthesis of archaeal membrane lipids. The polypeptide is CDP-archaeol synthase (Methanopyrus kandleri (strain AV19 / DSM 6324 / JCM 9639 / NBRC 100938)).